A 263-amino-acid chain; its full sequence is Oxidoreductase tpcG (263 aa).

The protein belongs to the avfA family. As to expression, specifically expressed in conidia.

It participates in secondary metabolite biosynthesis. Functionally, oxidoreductase; part of the gene cluster that mediates the biosynthesis of trypacidin, a mycotoxin with antiprotozoal activity and that plays a role in the infection process. The pathway begins with the synthesis of atrochrysone thioester by the polyketide synthase (PKS) tpcC. The atrochrysone carboxyl ACP thioesterase tpcB then breaks the thioester bond and releases the atrochrysone carboxylic acid from tpcC. The decarboxylase tpcK converts atrochrysone carboxylic acid to atrochrysone which is further reduced into emodin anthrone. The next step is performed by the emodin anthrone oxygenase tpcL that catalyzes the oxidation of emodinanthrone to emodin. Emodin O-methyltransferase encoded by tpcA catalyzes methylation of the 8-hydroxy group of emodin to form questin. Ring cleavage of questin by questin oxidase tpcI leads to desmethylsulochrin via several intermediates including questin epoxide. Another methylation step catalyzed by tpcM leads to the formation of sulochrin which is further converted to monomethylsulfochrin by tpcH. Finally, the tpcJ catalyzes the conversion of monomethylsulfochrin to trypacidin. Trypacidin is toxic for human pulmonary and bronchial epithelial cells by initiating the intracellular formation of nitric oxide (NO) and hydrogen peroxide (H(2)O(2)), thus triggering host necrotic cell death. The trypacidin pathway is also able to produce endocrocin via a distinct route from the endocrocin Enc pathway. This is Oxidoreductase tpcG from Aspergillus fumigatus (strain ATCC MYA-4609 / CBS 101355 / FGSC A1100 / Af293) (Neosartorya fumigata).